The sequence spans 339 residues: D-alanine--D-alanine ligase (339 aa).

The ATP-grasp domain maps to lysine 126–glutamate 333. Alanine 158 to glutamate 213 is an ATP binding site. Positions 286, 300, and 302 each coordinate Mg(2+).

The protein belongs to the D-alanine--D-alanine ligase family. Mg(2+) serves as cofactor. Requires Mn(2+) as cofactor.

It localises to the cytoplasm. The enzyme catalyses 2 D-alanine + ATP = D-alanyl-D-alanine + ADP + phosphate + H(+). It participates in cell wall biogenesis; peptidoglycan biosynthesis. Functionally, cell wall formation. The protein is D-alanine--D-alanine ligase of Deinococcus radiodurans (strain ATCC 13939 / DSM 20539 / JCM 16871 / CCUG 27074 / LMG 4051 / NBRC 15346 / NCIMB 9279 / VKM B-1422 / R1).